The chain runs to 602 residues: Alpha-glucosides permease MPH3 (602 aa).

Over 1–106 (MKNLSFLINR…AAAWSLLVST (106 aa)) the chain is Cytoplasmic. A helical transmembrane segment spans residues 107-127 (TLIMEGYDTAILGAFYALPIF). The Extracellular portion of the chain corresponds to 128–142 (QRKFGSQNDKTGEWE). The helical transmembrane segment at 143 to 163 (ISASWQIGLTLCYMAGEIVGL) threads the bilayer. Residues 164-178 (QLTGPSVDLVGNRYT) lie on the Cytoplasmic side of the membrane. Residues 179–199 (LIIALFFLAAFTFILYFCNSL) traverse the membrane as a helical segment. A topological domain (extracellular) is located at residue G200. The chain crosses the membrane as a helical span at residues 201-221 (MIAVGQALCGMPWGCFQCLTV). The Cytoplasmic segment spans residues 222–234 (SYASEICPLALRY). Residues 235–255 (YLTTYSNLCWLFGQLFAAGIM) traverse the membrane as a helical segment. Residues 256–270 (KNSQKKYADSELGYK) are Extracellular-facing. A helical membrane pass occupies residues 271–291 (LPFALQWILPVPLALGIFFAP). Residues 292–363 (ESPWWLVKKG…EDKINRRRTR (72 aa)) are Cytoplasmic-facing. The chain crosses the membrane as a helical span at residues 364 to 384 (ITCLCWAGQATCGSILIGYST). Residues 385 to 397 (YFYEKAGVSTEMS) are Extracellular-facing. A helical membrane pass occupies residues 398–418 (FTFSIIQYCLGICATFLSWWA). Over 419–426 (SKYFGRYD) the chain is Cytoplasmic. A helical transmembrane segment spans residues 427–447 (LYAFGLAFQTIVFFIIGGLGC). Over 448-459 (SSTHGSKMGSGS) the chain is Extracellular. Residues 460-480 (LLMAVAFFYNLGIAPVVFCLV) traverse the membrane as a helical segment. Topologically, residues 481–492 (SEMPSSRLRTKT) are cytoplasmic. Residues 493-513 (IILARNTYNVVSIICSVLILY) form a helical membrane-spanning segment. The Extracellular portion of the chain corresponds to 514–525 (QLNSKKWNWGAK). A helical membrane pass occupies residues 526-546 (SGFFWGVLCFCTLIWAVVDLP). The Cytoplasmic segment spans residues 547–602 (ETAGKTFVEINELFKLGVSARKFKSTKVDPFVVKTPPKDVSHNDPKGDIEASIAEE). The segment covering 582–595 (PPKDVSHNDPKGDI) has biased composition (basic and acidic residues). A disordered region spans residues 582–602 (PPKDVSHNDPKGDIEASIAEE).

It belongs to the major facilitator superfamily. Sugar transporter (TC 2.A.1.1) family.

The protein resides in the cell membrane. Functionally, high-affinity uptake of maltose and maltotriose. Also transports alpha-methylglucoside, glucose and turanose but not melezitose or trehalose. The polypeptide is Alpha-glucosides permease MPH3 (MPH3) (Saccharomyces cerevisiae (strain ATCC 204508 / S288c) (Baker's yeast)).